A 346-amino-acid chain; its full sequence is Sesquiterpene synthase Agr1 (346 aa).

Mg(2+) contacts are provided by D98, N234, S238, and E242. The DDXXD motif signature appears at 98-102 (DNLSD). R322 and Y323 together coordinate (2E,6E)-farnesyl diphosphate.

This sequence belongs to the terpene synthase family. It depends on Mg(2+) as a cofactor.

The enzyme catalyses (2E,6E)-farnesyl diphosphate = delta-cadinene + diphosphate. It catalyses the reaction (2E,6E)-farnesyl diphosphate = alpha-muurolene + diphosphate. It carries out the reaction (2E,6E)-farnesyl diphosphate = gamma-muurolene + diphosphate. The catalysed reaction is (2E,6E)-farnesyl diphosphate = alpha-selinene + diphosphate. Functionally, terpene cyclase that catalyzes the cyclization of farnesyl diphosphate (FPP) to various sesquiterpenes, including alpha-muurolene, gamma-muurolene, alpha-selinene, beta-selinene, delta-cadinene, alpha-cadinol and delta-cadinol. Delta-cadinene is the major product of Agr1. This is Sesquiterpene synthase Agr1 from Cyclocybe aegerita (Black poplar mushroom).